The primary structure comprises 141 residues: uncharacterized protein (141 aa).

The tract at residues 1 to 61 (IRLLHSLTPP…PPPPPPPRRA (61 aa)) is disordered. The span at 8 to 58 (TPPPPPPPPPPPPPPPPPPPPPPPPPPPPPPPPPPPPPPPPPPPPPPPPPP) shows a compositional bias: pro residues. Positions 98 to 116 (KRLLVAYPVRHFLSAACQF) form a DNA-binding region, H-T-H motif.

This is an uncharacterized protein from Owenia fusiformis (Polychaete worm).